We begin with the raw amino-acid sequence, 255 residues long: Small ribosomal subunit protein uS2 (255 aa).

The tract at residues 226–255 is disordered; sequence QGVSNEEVAAEQNIDLDEKEKSEETEATEE.

The protein belongs to the universal ribosomal protein uS2 family.

The polypeptide is Small ribosomal subunit protein uS2 (Staphylococcus aureus (strain JH1)).